We begin with the raw amino-acid sequence, 548 residues long: Chaperonin GroEL (548 aa).

ATP-binding positions include 30–33 (TLGP), K51, 87–91 (DGTTT), G415, and D496.

The protein belongs to the chaperonin (HSP60) family. Forms a cylinder of 14 subunits composed of two heptameric rings stacked back-to-back. Interacts with the co-chaperonin GroES.

The protein localises to the cytoplasm. The catalysed reaction is ATP + H2O + a folded polypeptide = ADP + phosphate + an unfolded polypeptide.. Functionally, together with its co-chaperonin GroES, plays an essential role in assisting protein folding. The GroEL-GroES system forms a nano-cage that allows encapsulation of the non-native substrate proteins and provides a physical environment optimized to promote and accelerate protein folding. The sequence is that of Chaperonin GroEL from Haemophilus influenzae (strain PittGG).